The chain runs to 536 residues: SNW domain-containing protein 1 (536 aa).

The interval 1–44 is disordered; that stretch reads MALTSFLPAPTQLSQDQLEAEERARSQRSLQTSLVSSRREPPPY. Ala-2 carries the post-translational modification N-acetylalanine. Ser-14 is modified (phosphoserine). Polar residues predominate over residues 27–36; the sequence is QRSLQTSLVS. The segment at 59–79 is interaction with PPIL1; it reads GDGGAFPEIHVAQYPLDMGRK. Residues Lys-81, Lys-97, Lys-115, Lys-122, Lys-141, Lys-158, and Lys-170 each participate in a glycyl lysine isopeptide (Lys-Gly) (interchain with G-Cter in SUMO2) cross-link. Residues 174–339 are SNW; it reads AQYIRYTPSQ…KARERRAGIK (166 aa). Ser-182 and Ser-190 each carry phosphoserine. Residue Lys-193 forms a Glycyl lysine isopeptide (Lys-Gly) (interchain with G-Cter in SUMO2) linkage. Positions 212–233 are disordered; it reads FKINKKIPRGPPSPPAPVMHSP. Residues Ser-224, Ser-232, and Ser-234 each carry the phosphoserine modification. Glycyl lysine isopeptide (Lys-Gly) (interchain with G-Cter in SUMO2) cross-links involve residues Lys-240, Lys-258, Lys-286, Lys-339, Lys-344, Lys-416, and Lys-441. Residues 311–386 are disordered; it reads KMAQKEKEKH…RSKLQRNENR (76 aa). The residue at position 446 (Ser-446) is a Phosphoserine. A Glycyl lysine isopeptide (Lys-Gly) (interchain with G-Cter in SUMO2) cross-link involves residue Lys-452. 2 stretches are compositionally biased toward basic and acidic residues: residues 467–489 and 503–530; these read IKTNRFVPDKEFSGSDRKQRGRE and KFLEEAKQHGGSKRPSDSSRPKEHEHEG. Residues 467–536 form a disordered region; that stretch reads IKTNRFVPDK…EHEGKKRRKE (70 aa). 2 positions are modified to phosphoserine: Ser-479 and Ser-481. Lys-509 participates in a covalent cross-link: Glycyl lysine isopeptide (Lys-Gly) (interchain with G-Cter in SUMO2).

Belongs to the SNW family. In terms of assembly, identified in the spliceosome C complex. Associates with U4/U6-U5 tri-small nuclear ribonucleoproteins (U4/U6-U5 tri-snRNPs). Component of the minor spliceosome, which splices U12-type introns. Interacts with SKI, SMAD2,SMAD3, RBPJ, RB1, PABPN1, MAGEA1, SIRT1, FOXN3, U2AF2, PPIL1, DAXX and ATP1B4. Interacts with VDR and RXRA; preferentially associates with VDR:RXRA heterodimers. Interacts with NCOR2. Interacts with MAML1. Interacts with NOTCH1 NICD; the interaction involves multimerized NOTCH1 NICD. Forms a complex with NOTCH1 NICD and MAML1; the association is dissociated by RBPJ. Associates with positive transcription elongation factor b (P-TEFb). Component of the SNARP complex which consists at least of SNIP1, SNW1, THRAP3, BCLAF1 and PNN.

Its subcellular location is the nucleus. Its function is as follows. Involved in pre-mRNA splicing as component of the spliceosome. As a component of the minor spliceosome, involved in the splicing of U12-type introns in pre-mRNAs. Required in the specific splicing of CDKN1A pre-mRNA; the function probably involves the recruitment of U2AF2 to the mRNA. May recruit PPIL1 to the spliceosome. May be involved in cyclin-D1/CCND1 mRNA stability through the SNARP complex which associates with both the 3'end of the CCND1 gene and its mRNA. Involved in transcriptional regulation. Modulates TGF-beta-mediated transcription via association with SMAD proteins, MYOD1-mediated transcription via association with PABPN1, RB1-mediated transcriptional repression, and retinoid-X receptor (RXR)- and vitamin D receptor (VDR)-dependent gene transcription in a cell line-specific manner probably involving coactivators NCOA1 and GRIP1. Is involved in NOTCH1-mediated transcriptional activation. Binds to multimerized forms of Notch intracellular domain (NICD) and is proposed to recruit transcriptional coactivators such as MAML1 to form an intermediate preactivation complex which associates with DNA-bound CBF-1/RBPJ to form a transcriptional activation complex by releasing SNW1 and redundant NOTCH1 NICD. This is SNW domain-containing protein 1 (Snw1) from Mus musculus (Mouse).